The sequence spans 122 residues: Large ribosomal subunit protein bL19 (122 aa).

The protein belongs to the bacterial ribosomal protein bL19 family.

This protein is located at the 30S-50S ribosomal subunit interface and may play a role in the structure and function of the aminoacyl-tRNA binding site. The chain is Large ribosomal subunit protein bL19 from Prosthecochloris aestuarii (strain DSM 271 / SK 413).